The chain runs to 98 residues: Sarcosine oxidase subunit delta (98 aa).

4 residues coordinate Zn(2+): cysteine 6, cysteine 9, histidine 59, and cysteine 63.

It belongs to the SoxD family. In terms of assembly, heterotetramer composed of subunits alpha (SoxA), beta (SoxB), gamma (SoxG) and delta (SoxD).

The protein resides in the cytoplasm. It carries out the reaction sarcosine + (6S)-5,6,7,8-tetrahydrofolate + O2 = (6R)-5,10-methylene-5,6,7,8-tetrahydrofolate + glycine + H2O2. It catalyses the reaction sarcosine + O2 + H2O = formaldehyde + glycine + H2O2. Its function is as follows. In the presence of tetrahydrofolate, catalyzes the oxidative demethylation of sarcosine to yield glycine, 5,10-methylenetetrahydrofolate and hydrogen peroxide. In the absence of tetrahydrofolate, catalyzes the oxidative demethylation of sarcosine to yield glycine, formaldehyde and hydrogen peroxide. This chain is Sarcosine oxidase subunit delta, found in Corynebacterium sp. (strain P-1).